A 347-amino-acid chain; its full sequence is Olfactory receptor 6J1 (347 aa).

Residues 1–24 are Extracellular-facing; the sequence is MGNWTAAVTEFVLLGFSLSREVEL. N-linked (GlcNAc...) asparagine glycosylation occurs at Asn-3. The helical transmembrane segment at 25–45 threads the bilayer; the sequence is LLLVLLLPTFLLTLLGNLLII. Residues 46 to 53 lie on the Cytoplasmic side of the membrane; it reads STVLSCSR. A helical transmembrane segment spans residues 54-74; sequence LHTPMYFFLCNLSILDILFTS. Topologically, residues 75-98 are extracellular; that stretch reads VISPKVLANLGSRDKTISFAGCIT. An intrachain disulfide couples Cys-96 to Cys-188. Residues 99–119 form a helical membrane-spanning segment; that stretch reads QCYFYFFLGTVEFLLLTVMSY. Topologically, residues 120 to 138 are cytoplasmic; it reads DRYATICCPLRYTTIMRPS. A helical membrane pass occupies residues 139-159; the sequence is VCIGTVVFSWVGGFLSVLFPT. The Extracellular portion of the chain corresponds to 160-196; it reads ILISQLPFCGSNIINHFFCDSGPLLALACADTTAIEL. A helical membrane pass occupies residues 197–216; that stretch reads MDFMLSSMVILCCIVLVAYS. The Cytoplasmic segment spans residues 217-236; the sequence is YTYIILTIVRIPSASGRKKA. The helical transmembrane segment at 237–257 threads the bilayer; that stretch reads FNTCASHLTIVIISSGITVFI. The Extracellular segment spans residues 258–270; sequence YVTPSQKEYLEIN. A helical membrane pass occupies residues 271–291; sequence KIPLVLSSVVTPFLNPFIYTL. The Cytoplasmic segment spans residues 292-347; that stretch reads RNDTVQGVLRDVWVRVRGVFEKRMRAVLRSRLSSNKDHQGRACSSPPCVYSVKLQC.

It belongs to the G-protein coupled receptor 1 family.

The protein resides in the cell membrane. Odorant receptor. This is Olfactory receptor 6J1 (OR6J1) from Homo sapiens (Human).